Reading from the N-terminus, the 589-residue chain is Guanylate-binding protein 2 (589 aa).

Positions 1 to 309 are GTPase domain (Globular); the sequence is MASEIHMSEP…GAISNGSLPC (309 aa). The GB1/RHD3-type G domain occupies 35–276; sequence TQPVVVVAIV…FTSYILSYSS (242 aa). GTP contacts are provided by residues 45–52, 181–182, and Leu-245; these read GLYRTGKS and RD. Cys-586 is modified (cysteine methyl ester). Cys-586 carries S-geranylgeranyl cysteine lipidation. Residues 587–589 constitute a propeptide, removed in mature form; that stretch reads TIL.

The protein belongs to the TRAFAC class dynamin-like GTPase superfamily. GB1/RHD3 GTPase family. GB1 subfamily. In terms of assembly, homodimer; homodimerization occurs upon GTP-binding and is required for the association with membranous structures. Heterodimer with other family members, including GBP1, GBP3, GBP4 and GBP5. In terms of processing, isoprenylation is required for proper subcellular location.

The protein resides in the cytoplasmic vesicle membrane. The protein localises to the golgi apparatus membrane. Its subcellular location is the cytoplasm. It localises to the perinuclear region. It carries out the reaction GTP + H2O = GDP + phosphate + H(+). In terms of biological role, interferon (IFN)-inducible GTPase that plays important roles in innate immunity against a diverse range of bacterial, viral and protozoan pathogens. Hydrolyzes GTP to GMP in 2 consecutive cleavage reactions, but the major reaction product is GDP. Following infection, recruited to the pathogen-containing vacuoles or vacuole-escaped bacteria and acts as a positive regulator of inflammasome assembly by promoting the release of inflammasome ligands from bacteria. Acts by promoting lysis of pathogen-containing vacuoles, releasing pathogens into the cytosol. Following pathogen release in the cytosol, promotes recruitment of proteins that mediate bacterial cytolysis, such as Gm12250/Irgb10: this liberates ligands that are detected by inflammasomes, such as lipopolysaccharide (LPS) that activates the non-canonical CASP4/CASP11 inflammasome or double-stranded DNA (dsDNA) that activates the AIM2 inflammasome. Confers protection to the protozoan pathogen Toxoplasma gondii. Independently of its GTPase activity, acts as an inhibitor of various viruses infectivity by inhibiting FURIN-mediated maturation of viral envelope proteins. In Mus musculus (Mouse), this protein is Guanylate-binding protein 2.